Reading from the N-terminus, the 152-residue chain is Protein-export protein SecB (152 aa).

The protein belongs to the SecB family. Homotetramer, a dimer of dimers. One homotetramer interacts with 1 SecA dimer.

The protein localises to the cytoplasm. In terms of biological role, one of the proteins required for the normal export of preproteins out of the cell cytoplasm. It is a molecular chaperone that binds to a subset of precursor proteins, maintaining them in a translocation-competent state. It also specifically binds to its receptor SecA. This Rickettsia conorii (strain ATCC VR-613 / Malish 7) protein is Protein-export protein SecB.